Reading from the N-terminus, the 444-residue chain is Phosphoglucosamine mutase (444 aa).

Ser100 (phosphoserine intermediate) is an active-site residue. Positions 100, 240, 242, and 244 each coordinate Mg(2+). Residue Ser100 is modified to Phosphoserine.

Belongs to the phosphohexose mutase family. It depends on Mg(2+) as a cofactor. Activated by phosphorylation.

The enzyme catalyses alpha-D-glucosamine 1-phosphate = D-glucosamine 6-phosphate. Its function is as follows. Catalyzes the conversion of glucosamine-6-phosphate to glucosamine-1-phosphate. The polypeptide is Phosphoglucosamine mutase (Desulforamulus reducens (strain ATCC BAA-1160 / DSM 100696 / MI-1) (Desulfotomaculum reducens)).